The chain runs to 622 residues: Low affinity potassium transport system protein Kup (622 aa).

A run of 12 helical transmembrane segments spans residues 12–32 (ITLA…LYTL), 49–69 (VFGF…IKYL), 103–123 (VIMG…TPAI), 137–157 (PQLD…LFMI), 165–185 (VGKL…VLGL), 213–233 (VSFI…ALYA), 247–267 (WFTV…ALLL), 276–296 (PFFL…AALA), 337–357 (IYIP…IVSF), 363–383 (LAAA…ILST), 396–416 (FVAL…SANL), and 419–439 (LLSG…IMTT).

This sequence belongs to the HAK/KUP transporter (TC 2.A.72) family.

The protein resides in the cell inner membrane. It catalyses the reaction K(+)(in) + H(+)(in) = K(+)(out) + H(+)(out). Functionally, responsible for the low-affinity transport of potassium into the cell. Likely operates as a K(+):H(+) symporter. This Salmonella gallinarum (strain 287/91 / NCTC 13346) protein is Low affinity potassium transport system protein Kup.